The following is a 626-amino-acid chain: ATP-dependent rRNA helicase spb4 (626 aa).

A Q motif motif is present at residues 14–42 (WDALTPSLAEWVLDAISSMGFEKMTPVQA). The Helicase ATP-binding domain maps to 45–246 (IPLFMGNKDV…RVGLRNPVKI (202 aa)). ATP is bound at residue 58 to 65 (AVTGSGKT). The short motif at 194–197 (DEAD) is the DEAD box element. In terms of domain architecture, Helicase C-terminal spans 279–437 (ALLSLLSQLE…TTGEAAKILI (159 aa)). Positions 553–599 (QREAWSQKHEKQDLKELKREKKKRKREIERLEKMTDEEKKEEQAKEK) are disordered. Composition is skewed to basic and acidic residues over residues 554 to 571 (REAWSQKHEKQDLKELKR) and 578 to 599 (REIERLEKMTDEEKKEEQAKEK). Residues 558–620 (SQKHEKQDLK…RKIEDDADVE (63 aa)) are a coiled coil.

This sequence belongs to the DEAD box helicase family. DDX55/SPB4 subfamily. Component of pre-60S ribosomal complexes.

The protein localises to the nucleus. It is found in the nucleolus. The enzyme catalyses ATP + H2O = ADP + phosphate + H(+). Functionally, ATP-binding RNA helicase involved in the biogenesis of 60S ribosomal subunits. Binds 90S pre-ribosomal particles and dissociates from pre-60S ribosomal particles after processing of 27SB pre-rRNA. Required for the normal formation of 18S rRNA through the processing of pre-rRNAs at sites A0, A1 and A2, and the normal formation of 25S and 5.8S rRNAs through the processing of pre-rRNAs at sites C1 and C2. The polypeptide is ATP-dependent rRNA helicase spb4 (Botryotinia fuckeliana (strain B05.10) (Noble rot fungus)).